Reading from the N-terminus, the 536-residue chain is Nuclear hormone receptor family member nhr-7 (536 aa).

Positions 6–82 (NRICAVCGDT…VGMNPDYVRP (77 aa)) form a DNA-binding region, nuclear receptor. NR C4-type zinc fingers lie at residues 9 to 29 (CAVC…CFGC) and 46 to 70 (CRFE…FRKC). The 224-residue stretch at 155–378 (ADRSLARKTG…PFHKILTDII (224 aa)) folds into the NR LBD domain. Residues 427–465 (SPCQISAPPPPQQQYTDYSQMPSTSSYPANSSPFQSPYR) form a disordered region. A compositionally biased stretch (polar residues) spans 439 to 465 (QQYTDYSQMPSTSSYPANSSPFQSPYR).

Belongs to the nuclear hormone receptor family.

The protein resides in the nucleus. Orphan nuclear receptor. The chain is Nuclear hormone receptor family member nhr-7 (nhr-7) from Caenorhabditis elegans.